A 340-amino-acid chain; its full sequence is Ketol-acid reductoisomerase (NADP(+)) (340 aa).

The 181-residue stretch at 3-183 (INVYYDKDCD…GGGRTGIIET (181 aa)) folds into the KARI N-terminal Rossmann domain. Residues 26 to 29 (FGSQ), serine 54, and 84 to 87 (DELQ) contribute to the NADP(+) site. Residue histidine 109 is part of the active site. NADP(+) is bound at residue glycine 135. Positions 184 to 329 (TFKDETETDL…KKLRAMMPWI (146 aa)) constitute a KARI C-terminal knotted domain. 4 residues coordinate Mg(2+): aspartate 192, glutamate 196, glutamate 228, and glutamate 232. Position 253 (serine 253) interacts with substrate.

Belongs to the ketol-acid reductoisomerase family. Requires Mg(2+) as cofactor.

It carries out the reaction (2R)-2,3-dihydroxy-3-methylbutanoate + NADP(+) = (2S)-2-acetolactate + NADPH + H(+). It catalyses the reaction (2R,3R)-2,3-dihydroxy-3-methylpentanoate + NADP(+) = (S)-2-ethyl-2-hydroxy-3-oxobutanoate + NADPH + H(+). It functions in the pathway amino-acid biosynthesis; L-isoleucine biosynthesis; L-isoleucine from 2-oxobutanoate: step 2/4. The protein operates within amino-acid biosynthesis; L-valine biosynthesis; L-valine from pyruvate: step 2/4. Its function is as follows. Involved in the biosynthesis of branched-chain amino acids (BCAA). Catalyzes an alkyl-migration followed by a ketol-acid reduction of (S)-2-acetolactate (S2AL) to yield (R)-2,3-dihydroxy-isovalerate. In the isomerase reaction, S2AL is rearranged via a Mg-dependent methyl migration to produce 3-hydroxy-3-methyl-2-ketobutyrate (HMKB). In the reductase reaction, this 2-ketoacid undergoes a metal-dependent reduction by NADPH to yield (R)-2,3-dihydroxy-isovalerate. This chain is Ketol-acid reductoisomerase (NADP(+)), found in Campylobacter concisus (strain 13826).